We begin with the raw amino-acid sequence, 209 residues long: Thymidylate kinase (209 aa).

10–17 contributes to the ATP binding site; that stretch reads GPDGAGKT.

The protein belongs to the thymidylate kinase family.

It catalyses the reaction dTMP + ATP = dTDP + ADP. In terms of biological role, phosphorylation of dTMP to form dTDP in both de novo and salvage pathways of dTTP synthesis. The sequence is that of Thymidylate kinase from Pediococcus pentosaceus (strain ATCC 25745 / CCUG 21536 / LMG 10740 / 183-1w).